A 242-amino-acid polypeptide reads, in one-letter code: Segregation and condensation protein A (242 aa).

The protein belongs to the ScpA family. Component of a cohesin-like complex composed of ScpA, ScpB and the Smc homodimer, in which ScpA and ScpB bind to the head domain of Smc. The presence of the three proteins is required for the association of the complex with DNA.

It localises to the cytoplasm. Functionally, participates in chromosomal partition during cell division. May act via the formation of a condensin-like complex containing Smc and ScpB that pull DNA away from mid-cell into both cell halves. The protein is Segregation and condensation protein A of Lactococcus lactis subsp. cremoris (strain MG1363).